Consider the following 380-residue polypeptide: Shedu protein SduA (380 aa).

Its function is as follows. Only component of antiviral defense system Shedu. Expression of Shedu in B.subtilis (strain BEST7003) confers resistance to phages phi105, phi29, rho14 and to a lesser extent to SPP1. May be an endonuclease. The chain is Shedu protein SduA from Bacillus cereus (strain B4264).